The following is a 740-amino-acid chain: Elongation factor 2 (740 aa).

The tr-type G domain maps to 23–264; the sequence is AQIRNAGTLA…MIIEHVPPPN (242 aa). GTP contacts are provided by residues 32 to 39, 98 to 102, and 152 to 155; these read AHVDHGKT, DTPGH, and NKID. H605 is modified (diphthamide).

This sequence belongs to the TRAFAC class translation factor GTPase superfamily. Classic translation factor GTPase family. EF-G/EF-2 subfamily.

The protein resides in the cytoplasm. Its function is as follows. Catalyzes the GTP-dependent ribosomal translocation step during translation elongation. During this step, the ribosome changes from the pre-translocational (PRE) to the post-translocational (POST) state as the newly formed A-site-bound peptidyl-tRNA and P-site-bound deacylated tRNA move to the P and E sites, respectively. Catalyzes the coordinated movement of the two tRNA molecules, the mRNA and conformational changes in the ribosome. This chain is Elongation factor 2, found in Pyrobaculum islandicum (strain DSM 4184 / JCM 9189 / GEO3).